Reading from the N-terminus, the 305-residue chain is tRNA dimethylallyltransferase (305 aa).

8 to 15 (GPTAVGKT) serves as a coordination point for ATP. A substrate-binding site is contributed by 10-15 (TAVGKT). An interaction with substrate tRNA region spans residues 33–36 (DSRQ).

This sequence belongs to the IPP transferase family. Monomer. Requires Mg(2+) as cofactor.

The catalysed reaction is adenosine(37) in tRNA + dimethylallyl diphosphate = N(6)-dimethylallyladenosine(37) in tRNA + diphosphate. In terms of biological role, catalyzes the transfer of a dimethylallyl group onto the adenine at position 37 in tRNAs that read codons beginning with uridine, leading to the formation of N6-(dimethylallyl)adenosine (i(6)A). The chain is tRNA dimethylallyltransferase from Thermotoga sp. (strain RQ2).